The following is a 334-amino-acid chain: Adenosine deaminase (334 aa).

Positions 12 and 14 each coordinate Zn(2+). H14, D16, and G170 together coordinate substrate. H197 lines the Zn(2+) pocket. Catalysis depends on E200, which acts as the Proton donor. A Zn(2+)-binding site is contributed by D278. D279 serves as a coordination point for substrate.

This sequence belongs to the metallo-dependent hydrolases superfamily. Adenosine and AMP deaminases family. Adenosine deaminase subfamily. Zn(2+) is required as a cofactor.

It carries out the reaction adenosine + H2O + H(+) = inosine + NH4(+). The enzyme catalyses 2'-deoxyadenosine + H2O + H(+) = 2'-deoxyinosine + NH4(+). In terms of biological role, catalyzes the hydrolytic deamination of adenosine and 2-deoxyadenosine. The polypeptide is Adenosine deaminase (Vibrio cholerae serotype O1 (strain ATCC 39541 / Classical Ogawa 395 / O395)).